Reading from the N-terminus, the 133-residue chain is Small ribosomal subunit protein eS17 (133 aa).

Belongs to the eukaryotic ribosomal protein eS17 family.

The polypeptide is Small ribosomal subunit protein eS17 (RpS17) (Spodoptera frugiperda (Fall armyworm)).